Here is a 317-residue protein sequence, read N- to C-terminus: GTPase Era (317 aa).

The Era-type G domain occupies 23–190; that stretch reads RSGFVALIGP…MDYLVETLPE (168 aa). Residues 31–38 form a G1 region; the sequence is GPTNAGKS. 31-38 lines the GTP pocket; the sequence is GPTNAGKS. The segment at 57-61 is G2; the sequence is QTTRA. Positions 78–81 are G3; sequence DTPG. Residues 78 to 82 and 140 to 143 each bind GTP; these read DTPGI and NKID. The G4 stretch occupies residues 140–143; sequence NKID. The interval 169 to 171 is G5; the sequence is ISA. Positions 221–298 constitute a KH type-2 domain; it reads LHQELPYASH…HLFLFVKVRE (78 aa).

The protein belongs to the TRAFAC class TrmE-Era-EngA-EngB-Septin-like GTPase superfamily. Era GTPase family. As to quaternary structure, monomer.

It is found in the cytoplasm. Its subcellular location is the cell inner membrane. In terms of biological role, an essential GTPase that binds both GDP and GTP, with rapid nucleotide exchange. Plays a role in 16S rRNA processing and 30S ribosomal subunit biogenesis and possibly also in cell cycle regulation and energy metabolism. The protein is GTPase Era of Agrobacterium fabrum (strain C58 / ATCC 33970) (Agrobacterium tumefaciens (strain C58)).